We begin with the raw amino-acid sequence, 352 residues long: MATVVMEQIGRLFINAQQLRQIPQLLESAFPTLPCTVKVSDVPWVFRERHILTGYRQPDQSWRYYFLTLFQRHNETLNVWTHLLAAFIILVKWQEISETVDFLRDPHAQPLFIVLLAAFTYLSFSALAHLLSAKSELSYYTFYFLDYVGVAVYQYGSALAHYYYAIEKEWHTKVQGLFLPAAAFLAWLTCFGCCYGKYASPELPKVANKLFQVVPSALAYCLDISPVVHRIYSCYQEGCSDPVVAYHFYHVVFFLIGAYFFCCPHPESLFPGKCDFIGQGHQLFHVFVVVCTLTQVEALRTDFTERRPFYERLHGDLAHDAVALFIFTACCSALTAFYVRQRVRASLHEKGE.

The Cytoplasmic segment spans residues 1 to 75 (MATVVMEQIG…FLTLFQRHNE (75 aa)). The chain crosses the membrane as a helical span at residues 76–96 (TLNVWTHLLAAFIILVKWQEI). At 97 to 110 (SETVDFLRDPHAQP) the chain is on the extracellular side. A helical transmembrane segment spans residues 111-131 (LFIVLLAAFTYLSFSALAHLL). Residues 132–139 (SAKSELSY) are Cytoplasmic-facing. Residues 140-160 (YTFYFLDYVGVAVYQYGSALA) form a helical membrane-spanning segment. Over 161–175 (HYYYAIEKEWHTKVQ) the chain is Extracellular. Residues 176–196 (GLFLPAAAFLAWLTCFGCCYG) form a helical membrane-spanning segment. Residues 197-242 (KYASPELPKVANKLFQVVPSALAYCLDISPVVHRIYSCYQEGCSDP) are Cytoplasmic-facing. Residues 243 to 263 (VVAYHFYHVVFFLIGAYFFCC) traverse the membrane as a helical segment. Over 264–275 (PHPESLFPGKCD) the chain is Extracellular. A helical transmembrane segment spans residues 276–296 (FIGQGHQLFHVFVVVCTLTQV). Residues 297 to 316 (EALRTDFTERRPFYERLHGD) are Cytoplasmic-facing. The helical transmembrane segment at 317 to 337 (LAHDAVALFIFTACCSALTAF) threads the bilayer. The Extracellular segment spans residues 338-352 (YVRQRVRASLHEKGE).

This sequence belongs to the ADIPOR family. As to expression, strongly expressed in ovary and brain; lower expression in testis and pituitary. Not detected in heart, kidney, spleen, intestine, gill and muscle.

The protein resides in the cell membrane. Steroid membrane receptor. Binds progesterone, progestin and 17-hydroxyprogesterone in vitro. Capable of mediating progestin-induced oocyte maturation. This is Membrane progestin receptor alpha (mpra) from Cynoscion nebulosus (Spotted seatrout).